Reading from the N-terminus, the 167-residue chain is Bacterial non-heme ferritin-like protein (167 aa).

Positions 1 to 145 (MATAGMLLKL…TILDEVRSAK (145 aa)) constitute a Ferritin-like diiron domain.

This sequence belongs to the ferritin family. Prokaryotic subfamily.

It localises to the cytoplasm. The protein is Bacterial non-heme ferritin-like protein (ftnB) of Escherichia coli O157:H7.